The chain runs to 500 residues: Glutathione gamma-glutamylcysteinyltransferase 1 (500 aa).

Positions 1–221 (MEVASLYRRV…GFMLVSRRSS (221 aa)) constitute a Peptidase C83 domain. Active-site residues include Cys-56, His-162, and Asp-180.

Belongs to the phytochelatin synthase family. In terms of tissue distribution, expressed in roots and shoots.

The catalysed reaction is [Glu(-Cys)](n)-Gly + glutathione + H(+) = [Glu(-Cys)](n+1)-Gly + glycine. With respect to regulation, requires cadmium for activity. Its function is as follows. Involved in the synthesis of phytochelatins (PC) and homophytochelatins (hPC), the heavy-metal-binding peptides of plants. In Triticum aestivum (Wheat), this protein is Glutathione gamma-glutamylcysteinyltransferase 1 (PCS1).